A 462-amino-acid polypeptide reads, in one-letter code: Neuronal acetylcholine receptor subunit non-alpha-2 (462 aa).

Positions M1 to R30 are cleaved as a signal peptide. Residues E31–L234 are Extracellular-facing. Residues N53 and N168 are each glycosylated (N-linked (GlcNAc...) asparagine). C155 and C169 are disulfide-bonded. 3 consecutive transmembrane segments (helical) span residues P235–L259, V267–I284, and Y301–V322. Residues H323–R428 lie on the Cytoplasmic side of the membrane. Residues E362–P372 show a composition bias toward basic and acidic residues. A disordered region spans residues E362–E384. A helical transmembrane segment spans residues I429 to F446.

This sequence belongs to the ligand-gated ion channel (TC 1.A.9) family. Acetylcholine receptor (TC 1.A.9.1) subfamily. Neuronal AChR seems to be composed of two different type of subunits: alpha and beta.

The protein resides in the postsynaptic cell membrane. The protein localises to the cell membrane. Its function is as follows. After binding acetylcholine, the AChR responds by an extensive change in conformation that affects all subunits and leads to opening of an ion-conducting channel across the plasma membrane. The sequence is that of Neuronal acetylcholine receptor subunit non-alpha-2 from Carassius auratus (Goldfish).